Here is a 409-residue protein sequence, read N- to C-terminus: Nucleoprotein (409 aa).

Disordered stretches follow at residues 1–32 (MASG…SSGN), 45–69 (NSHP…QQHG), 122–145 (DVKS…LRFS), 164–194 (RSGR…GSED), and 238–259 (VDQV…DKMN). Low complexity predominate over residues 15 to 31 (PVIKLGGPKPPKVGSSG). The segment at 29 to 160 (SSGNASWFQA…GNFRWDFIPL (132 aa)) is RNA-binding. The 126-residue stretch at 31–156 (GNASWFQAIK…GGPDGNFRWD (126 aa)) folds into the CoV N NTD domain. A compositionally biased stretch (basic and acidic residues) spans 122-138 (DVKSRSHQGTRDPDKFD). The span at 164–179 (RSGRSTAASSAASSRA) shows a compositional bias: low complexity. Composition is skewed to basic and acidic residues over residues 180 to 192 (PSRD…RSGS) and 247 to 259 (KGKE…DKMN). Serine 190 and serine 192 each carry phosphoserine; by host. One can recognise a CoV N CTD domain in the interval 219–331 (ADEMAHRRYC…QCVDGVGTRP (113 aa)). The segment at 226–333 (RYCKRTIPPG…VDGVGTRPKD (108 aa)) is dimerization. A disulfide bridge connects residues cysteine 320 and cysteine 323. A disordered region spans residues 326 to 409 (GVGTRPKDDE…GDSALGENEL (84 aa)). The segment covering 341-357 (RSSSRPATRTSSPAPRQ) has biased composition (low complexity). Residues 358 to 367 (QRPKKEKKPK) show a composition bias toward basic residues. A Phosphothreonine; by host modification is found at threonine 378. Serine 379 is modified (phosphoserine; by host).

It belongs to the gammacoronavirus nucleocapsid protein family. Homooligomer. Both monomeric and oligomeric forms interact with RNA. Interacts with protein M. Interacts with NSP3; this interaction serves to tether the genome to the newly translated replicase-transcriptase complex at a very early stage of infection. Post-translationally, ADP-ribosylated. The ADP-ribosylation is retained in the virion during infection. Phosphorylated on serine and threonine residues.

The protein localises to the virion. Its subcellular location is the host endoplasmic reticulum-Golgi intermediate compartment. It is found in the host Golgi apparatus. Packages the positive strand viral genome RNA into a helical ribonucleocapsid (RNP) and plays a fundamental role during virion assembly through its interactions with the viral genome and membrane protein M. Plays an important role in enhancing the efficiency of subgenomic viral RNA transcription as well as viral replication. This chain is Nucleoprotein, found in Avian infectious bronchitis virus (strain Arkansas 99) (IBV).